A 1138-amino-acid polypeptide reads, in one-letter code: Lysylphosphatidylglycerol biosynthesis bifunctional protein LysX (1138 aa).

Residues 1 to 15 (MALDTPSSDLPVSTD) are compositionally biased toward polar residues. A disordered region spans residues 1–34 (MALDTPSSDLPVSTDDTAEHQPTPAHRPPSAADR). The segment at 1 to 646 (MALDTPSSDL…LIAQLESEED (646 aa)) is phosphatidylglycerol lysyltransferase. The next 6 helical transmembrane spans lie at 56–76 (IAGT…IFPL), 92–112 (IVSL…VAIA), 119–139 (IAWW…ALLL), 155–175 (IQIW…IVTY), 190–210 (ALGV…GLVW), and 247–267 (IVID…AATV). Positions 647 to 1138 (RTAVEVHRPE…AFPMVKPTDA (492 aa)) are lysine--tRNA ligase. Residues 698–772 (VTIAGRVTKM…GELSVLIDAW (75 aa)) constitute a DNA-binding region (OB). Mg(2+) contacts are provided by Asp1048 and Glu1055.

The protein in the N-terminal section; belongs to the LPG synthetase family. It in the C-terminal section; belongs to the class-II aminoacyl-tRNA synthetase family. Mg(2+) serves as cofactor.

The protein localises to the cell membrane. It catalyses the reaction tRNA(Lys) + L-lysine + ATP = L-lysyl-tRNA(Lys) + AMP + diphosphate. It carries out the reaction L-lysyl-tRNA(Lys) + a 1,2-diacyl-sn-glycero-3-phospho-(1'-sn-glycerol) = a 1,2-diacyl-sn-glycero-3-phospho-1'-(3'-O-L-lysyl)-sn-glycerol + tRNA(Lys). Functionally, catalyzes the production of L-lysyl-tRNA(Lys)transfer and the transfer of a lysyl group from L-lysyl-tRNA(Lys) to membrane-bound phosphatidylglycerol (PG), which produces lysylphosphatidylglycerol (LPG), one of the components of the bacterial membrane with a positive net charge. LPG synthesis contributes to the resistance to cationic antimicrobial peptides (CAMPs) and likely protects M.tuberculosis against the CAMPs produced by competiting microorganisms (bacteriocins). In fact, the modification of anionic phosphatidylglycerol with positively charged L-lysine results in repulsion of the peptides. This is Lysylphosphatidylglycerol biosynthesis bifunctional protein LysX (lysX) from Gordonia bronchialis (strain ATCC 25592 / DSM 43247 / BCRC 13721 / JCM 3198 / KCTC 3076 / NBRC 16047 / NCTC 10667) (Rhodococcus bronchialis).